A 426-amino-acid chain; its full sequence is Cytochrome c biogenesis protein CcsB (426 aa).

Helical transmembrane passes span 14-34, 72-92, and 162-182; these read LKIA…GTLI, SFWF…CSFR, and LGPI…TYGS.

Belongs to the Ccs1/CcsB family. May interact with CcsA.

Its subcellular location is the cellular thylakoid membrane. Functionally, required during biogenesis of c-type cytochromes (cytochrome c6 and cytochrome f) at the step of heme attachment. The polypeptide is Cytochrome c biogenesis protein CcsB (Prochlorococcus marinus (strain NATL1A)).